Consider the following 244-residue polypeptide: INO80 complex subunit E (244 aa).

A coiled-coil region spans residues 10 to 54; that stretch reads DYKKKYRNLKRKLKFLIYEHECFQEELRKAQRKLLKVSRDKSFLL. The interval 63–236 is disordered; it reads VDEDSSDSDA…SGDDALDGDD (174 aa). Over residues 99 to 115 the composition is skewed to low complexity; that stretch reads PPLGGAPSPSSLSLPPS. Residues 157 to 171 show a composition bias toward basic residues; it reads RPKREKRPRLPRKLK. Glycyl lysine isopeptide (Lys-Gly) (interchain with G-Cter in SUMO2) cross-links involve residues K159 and K171. A compositionally biased stretch (pro residues) spans 202-212; sequence PLPPPKMPPPT.

Component of the chromatin remodeling INO80 complex; specifically part of a complex module associated with the N-terminus of INO80.

The protein localises to the nucleus. Its function is as follows. Putative regulatory component of the chromatin remodeling INO80 complex which is involved in transcriptional regulation, DNA replication and probably DNA repair. The polypeptide is INO80 complex subunit E (INO80E) (Homo sapiens (Human)).